The primary structure comprises 103 residues: Pyrimidine/purine nucleoside phosphorylase (103 aa).

This sequence belongs to the nucleoside phosphorylase PpnP family.

It catalyses the reaction a purine D-ribonucleoside + phosphate = a purine nucleobase + alpha-D-ribose 1-phosphate. The catalysed reaction is adenosine + phosphate = alpha-D-ribose 1-phosphate + adenine. The enzyme catalyses cytidine + phosphate = cytosine + alpha-D-ribose 1-phosphate. It carries out the reaction guanosine + phosphate = alpha-D-ribose 1-phosphate + guanine. It catalyses the reaction inosine + phosphate = alpha-D-ribose 1-phosphate + hypoxanthine. The catalysed reaction is thymidine + phosphate = 2-deoxy-alpha-D-ribose 1-phosphate + thymine. The enzyme catalyses uridine + phosphate = alpha-D-ribose 1-phosphate + uracil. It carries out the reaction xanthosine + phosphate = alpha-D-ribose 1-phosphate + xanthine. In terms of biological role, catalyzes the phosphorolysis of diverse nucleosides, yielding D-ribose 1-phosphate and the respective free bases. Can use uridine, adenosine, guanosine, cytidine, thymidine, inosine and xanthosine as substrates. Also catalyzes the reverse reactions. In Dechloromonas aromatica (strain RCB), this protein is Pyrimidine/purine nucleoside phosphorylase.